The following is a 542-amino-acid chain: Anaerobic glycerol-3-phosphate dehydrogenase subunit A (542 aa).

Residue 10–38 (DVIIIGGGATGAGIARDCALRGLRVILVE) participates in FAD binding.

It belongs to the FAD-dependent glycerol-3-phosphate dehydrogenase family. Composed of a catalytic GlpA/B dimer and of membrane bound GlpC. FAD is required as a cofactor. Requires FMN as cofactor.

It localises to the cell inner membrane. It carries out the reaction a quinone + sn-glycerol 3-phosphate = dihydroxyacetone phosphate + a quinol. It functions in the pathway polyol metabolism; glycerol degradation via glycerol kinase pathway; glycerone phosphate from sn-glycerol 3-phosphate (anaerobic route): step 1/1. Functionally, conversion of glycerol 3-phosphate to dihydroxyacetone. Uses fumarate or nitrate as electron acceptor. The polypeptide is Anaerobic glycerol-3-phosphate dehydrogenase subunit A (glpA) (Escherichia coli O157:H7).